The sequence spans 466 residues: Methylenetetrahydrofolate--tRNA-(uracil-5-)-methyltransferase TrmFO (466 aa).

Glycine 14 to glycine 19 serves as a coordination point for FAD.

The protein belongs to the MnmG family. TrmFO subfamily. It depends on FAD as a cofactor.

Its subcellular location is the cytoplasm. It carries out the reaction uridine(54) in tRNA + (6R)-5,10-methylene-5,6,7,8-tetrahydrofolate + NADH + H(+) = 5-methyluridine(54) in tRNA + (6S)-5,6,7,8-tetrahydrofolate + NAD(+). It catalyses the reaction uridine(54) in tRNA + (6R)-5,10-methylene-5,6,7,8-tetrahydrofolate + NADPH + H(+) = 5-methyluridine(54) in tRNA + (6S)-5,6,7,8-tetrahydrofolate + NADP(+). Its function is as follows. Catalyzes the folate-dependent formation of 5-methyl-uridine at position 54 (M-5-U54) in all tRNAs. The chain is Methylenetetrahydrofolate--tRNA-(uracil-5-)-methyltransferase TrmFO from Brucella melitensis biotype 1 (strain ATCC 23456 / CCUG 17765 / NCTC 10094 / 16M).